Consider the following 307-residue polypeptide: Ribosomal RNA small subunit methyltransferase H (307 aa).

S-adenosyl-L-methionine-binding positions include 32–34, D52, F78, D99, and Q106; that span reads GGH.

It belongs to the methyltransferase superfamily. RsmH family.

It is found in the cytoplasm. It carries out the reaction cytidine(1402) in 16S rRNA + S-adenosyl-L-methionine = N(4)-methylcytidine(1402) in 16S rRNA + S-adenosyl-L-homocysteine + H(+). In terms of biological role, specifically methylates the N4 position of cytidine in position 1402 (C1402) of 16S rRNA. The polypeptide is Ribosomal RNA small subunit methyltransferase H (Acinetobacter baumannii (strain AB0057)).